The sequence spans 167 residues: Fluoride-specific ion channel FluC (167 aa).

4 helical membrane passes run 32–52 (HVTPIYTIAAISLGASLGALA), 69–89 (IGTLAANLIAAYVVGVTIAYV), 102–122 (FMITGLAGGLSTFSTFTAELF), and 137–157 (LGLHVGGSLALLMLGMLTIGL). G109 and S112 together coordinate Na(+).

This sequence belongs to the fluoride channel Fluc/FEX (TC 1.A.43) family.

It localises to the cell inner membrane. It catalyses the reaction fluoride(in) = fluoride(out). With respect to regulation, na(+) is not transported, but it plays an essential structural role and its presence is essential for fluoride channel function. Functionally, fluoride-specific ion channel. Important for reducing fluoride concentration in the cell, thus reducing its toxicity. The polypeptide is Fluoride-specific ion channel FluC (Xanthomonas oryzae pv. oryzae (strain KACC10331 / KXO85)).